A 103-amino-acid chain; its full sequence is Urease subunit beta (103 aa).

This sequence belongs to the urease beta subunit family. Heterotrimer of UreA (gamma), UreB (beta) and UreC (alpha) subunits. Three heterotrimers associate to form the active enzyme.

It is found in the cytoplasm. It carries out the reaction urea + 2 H2O + H(+) = hydrogencarbonate + 2 NH4(+). It functions in the pathway nitrogen metabolism; urea degradation; CO(2) and NH(3) from urea (urease route): step 1/1. The polypeptide is Urease subunit beta (Streptomyces avermitilis (strain ATCC 31267 / DSM 46492 / JCM 5070 / NBRC 14893 / NCIMB 12804 / NRRL 8165 / MA-4680)).